The chain runs to 268 residues: Mediator of RNA polymerase II transcription subunit 8 (268 aa).

The stretch at 1–29 (MQREEKQLEASLDALLNQVADLKNSLGSF) forms a coiled coil. Ser82 is subject to Phosphoserine. Residues 133-163 (ADAAQKQIQSLNKMCSNLLEKISKEERESES) are a coiled coil. An interaction with the Elongin BC complex region spans residues 142-151 (SLNKMCSNLL). 2 disordered regions span residues 156–176 (KEER…FNPG) and 193–268 (NWRP…PYQR). The segment covering 200–209 (SGPGQPGQPG) has biased composition (gly residues).

The protein belongs to the Mediator complex subunit 8 family. In terms of assembly, component of the Mediator complex, which is composed of MED1, MED4, MED6, MED7, MED8, MED9, MED10, MED11, MED12, MED13, MED13L, MED14, MED15, MED16, MED17, MED18, MED19, MED20, MED21, MED22, MED23, MED24, MED25, MED26, MED27, MED29, MED30, MED31, CCNC, CDK8 and CDC2L6/CDK11. The MED12, MED13, CCNC and CDK8 subunits form a distinct module termed the CDK8 module. Mediator containing the CDK8 module is less active than Mediator lacking this module in supporting transcriptional activation. Individual preparations of the Mediator complex lacking one or more distinct subunits have been variously termed ARC, CRSP, DRIP, PC2, SMCC and TRAP. May be part of a multisubunit E3 ubiquitin-protein ligase complex with the Elongin BC complex (ELOB and ELOC), CUL2 and RBX1.

The protein localises to the nucleus. It participates in protein modification; protein ubiquitination. Functionally, component of the Mediator complex, a coactivator involved in the regulated transcription of nearly all RNA polymerase II-dependent genes. Mediator functions as a bridge to convey information from gene-specific regulatory proteins to the basal RNA polymerase II transcription machinery. Mediator is recruited to promoters by direct interactions with regulatory proteins and serves as a scaffold for the assembly of a functional preinitiation complex with RNA polymerase II and the general transcription factors. May play a role as a target recruitment subunit in E3 ubiquitin-protein ligase complexes and thus in ubiquitination and subsequent proteasomal degradation of target proteins. The chain is Mediator of RNA polymerase II transcription subunit 8 (Med8) from Mus musculus (Mouse).